The primary structure comprises 438 residues: Serine--tRNA ligase (438 aa).

Thr245 to Glu247 is a binding site for L-serine. An ATP-binding site is contributed by Arg276–Glu278. Glu299 is an L-serine binding site. Residue Glu363–Ser366 participates in ATP binding. Ser398 provides a ligand contact to L-serine.

It belongs to the class-II aminoacyl-tRNA synthetase family. Type-1 seryl-tRNA synthetase subfamily. As to quaternary structure, homodimer. The tRNA molecule binds across the dimer.

It localises to the cytoplasm. It carries out the reaction tRNA(Ser) + L-serine + ATP = L-seryl-tRNA(Ser) + AMP + diphosphate + H(+). The catalysed reaction is tRNA(Sec) + L-serine + ATP = L-seryl-tRNA(Sec) + AMP + diphosphate + H(+). Its pathway is aminoacyl-tRNA biosynthesis; selenocysteinyl-tRNA(Sec) biosynthesis; L-seryl-tRNA(Sec) from L-serine and tRNA(Sec): step 1/1. Functionally, catalyzes the attachment of serine to tRNA(Ser). Is also able to aminoacylate tRNA(Sec) with serine, to form the misacylated tRNA L-seryl-tRNA(Sec), which will be further converted into selenocysteinyl-tRNA(Sec). The polypeptide is Serine--tRNA ligase (Verminephrobacter eiseniae (strain EF01-2)).